Here is a 309-residue protein sequence, read N- to C-terminus: Homoserine O-succinyltransferase (309 aa).

Cys-142 serves as the catalytic Acyl-thioester intermediate. 2 residues coordinate substrate: Lys-163 and Ser-192. Residue His-235 is the Proton acceptor of the active site. Glu-237 is an active-site residue. Residue Arg-249 coordinates substrate.

Belongs to the MetA family.

It localises to the cytoplasm. It catalyses the reaction L-homoserine + succinyl-CoA = O-succinyl-L-homoserine + CoA. It participates in amino-acid biosynthesis; L-methionine biosynthesis via de novo pathway; O-succinyl-L-homoserine from L-homoserine: step 1/1. In terms of biological role, transfers a succinyl group from succinyl-CoA to L-homoserine, forming succinyl-L-homoserine. The polypeptide is Homoserine O-succinyltransferase (Enterobacter sp. (strain 638)).